The chain runs to 114 residues: UPF0102 protein HPSH_02690 (114 aa).

It belongs to the UPF0102 family.

This Helicobacter pylori (strain Shi470) protein is UPF0102 protein HPSH_02690.